Consider the following 112-residue polypeptide: Truncated ankyrin repeat protein B25 (112 aa).

It belongs to the orthopoxviruses B25 protein family.

This chain is Truncated ankyrin repeat protein B25, found in Bos taurus (Bovine).